We begin with the raw amino-acid sequence, 138 residues long: Large-conductance mechanosensitive channel (138 aa).

A run of 2 helical transmembrane segments spans residues 10–30 (FAMRGNVVDLAVGVIIGAAFG) and 76–96 (GSFIQTIFDFVIVAFAIFLAI).

This sequence belongs to the MscL family. In terms of assembly, homopentamer.

The protein localises to the cell inner membrane. Its function is as follows. Channel that opens in response to stretch forces in the membrane lipid bilayer. May participate in the regulation of osmotic pressure changes within the cell. The chain is Large-conductance mechanosensitive channel from Serratia proteamaculans (strain 568).